The sequence spans 150 residues: Large ribosomal subunit protein bL9 (150 aa).

It belongs to the bacterial ribosomal protein bL9 family.

Functionally, binds to the 23S rRNA. The polypeptide is Large ribosomal subunit protein bL9 (Neisseria gonorrhoeae).